Reading from the N-terminus, the 161-residue chain is Type-1 angiotensin II receptor-associated protein (161 aa).

Over 1 to 26 the chain is Extracellular; it reads MELPAVNLKVILLVHWLLTTWGCLVF. A helical transmembrane segment spans residues 27 to 47; it reads SSSYAWGNFTILALGVWAVAQ. Residues 48–53 lie on the Cytoplasmic side of the membrane; the sequence is RDSIDA. Residues 54-74 form a helical membrane-spanning segment; that stretch reads IGMFLGGLVATIFLDIIYISI. Topologically, residues 75–86 are extracellular; sequence FYSSVATGDTGR. The chain crosses the membrane as a helical span at residues 87 to 107; sequence FGAGMAILSLLLKPFSCCLVY. Over 108-161 the chain is Cytoplasmic; the sequence is HMHRERGGELPLRPDFFGPSQEHSAYQTIDSSSDAAADPFASLENKGQAVPRGY. The segment at 110–122 is interaction with AGTR1; the sequence is HRERGGELPLRPD. Phosphoserine is present on Ser127. A Phosphothreonine modification is found at Thr135. A Phosphoserine modification is found at Ser138.

In terms of assembly, interacts with RACK1, and with the C-terminal region of AGTR1. Ubiquitous but more abundant in kidney, testis and heart.

The protein localises to the endoplasmic reticulum membrane. Its subcellular location is the golgi apparatus membrane. It is found in the cytoplasmic vesicle membrane. In terms of biological role, appears to be a negative regulator of type-1 angiotensin II receptor-mediated signaling by regulating receptor internalization as well as mechanism of receptor desensitization such as phosphorylation. Also induces a decrease in angiotensin II-stimulated transcriptional activity. May play a role of negative regulator in cardiomyocyte hypertrophy induced by angiotensin II through an inhibition of p38 mitogen-activated protein kinase pathway. The protein is Type-1 angiotensin II receptor-associated protein (Agtrap) of Mus musculus (Mouse).